A 484-amino-acid polypeptide reads, in one-letter code: Coronin-1B (484 aa).

Residue Ser-2 is modified to Phosphoserine. WD repeat units lie at residues 80–120 (GHTG…LTSP), 130–170 (GHTK…ELYR), 174–213 (LHPD…LVAE), 217–260 (AHEG…EPMA), and 265–305 (DSSN…PYIH). The stretch at 447-481 (KLEEVMHGLRALRVLVKEQGERISRLEEHLGRMEN) forms a coiled coil.

This sequence belongs to the WD repeat coronin family. As to quaternary structure, forms homooligomers, but does not form complexes with the other coronins. Interacts with Arp2/3 complex components, including ACTR2, ARPC1B and ARPC2. Binds actin. Post-translationally, phosphorylation on Ser-2 regulates the interaction with the Arp2/3 complex and cell motility in fibroblasts. Phosphorylation does not seem to affect subcellular location.

It localises to the cytoplasm. Its subcellular location is the cytoskeleton. The protein resides in the stress fiber. Functionally, regulates leading edge dynamics and cell motility in fibroblasts. May be involved in cytokinesis and signal transduction. This Rattus norvegicus (Rat) protein is Coronin-1B (Coro1b).